The primary structure comprises 407 residues: Histidine--tRNA ligase (407 aa).

This sequence belongs to the class-II aminoacyl-tRNA synthetase family. As to quaternary structure, homodimer.

It localises to the cytoplasm. The enzyme catalyses tRNA(His) + L-histidine + ATP = L-histidyl-tRNA(His) + AMP + diphosphate + H(+). In Wolbachia pipientis subsp. Culex pipiens (strain wPip), this protein is Histidine--tRNA ligase.